A 198-amino-acid polypeptide reads, in one-letter code: Syndecan-4 (198 aa).

A signal peptide spans M1–A18. The Extracellular portion of the chain corresponds to E19–E145. S39, S61, and S63 each carry an O-linked (Xyl...) (glycosaminoglycan) serine glycan. Residue S95 is glycosylated (O-linked (Xyl...) (chondroitin sulfate) serine). A helical membrane pass occupies residues V146–Y170. The Cytoplasmic portion of the chain corresponds to R171–A198.

Belongs to the syndecan proteoglycan family. As to quaternary structure, homodimer. Interacts with CDCP1 and SDCBP. Interacts (via its cytoplasmic domain) with GIPC (via its PDZ domain). Interacts (via its cytoplasmic domain) with NUDT16L1. Interacts with DNM2; this interaction is markedly enhanced at focal ahesion site upon induction of focal adhesions and stress-fiber formation. In terms of processing, shedding is enhanced by a number of factors such as heparanase, thrombin or EGF. Also by stress and wound healing. PMA-mediated shedding is inhibited by TIMP3. Post-translationally, O-glycosylated; contains both chondroitin sulfate and heparan sulfate. Ser-39, Ser-61 and Ser-63 can all be modified by either chondroitin sulfate or heparan sulfate, and the protein exists in forms that contain only chondroitin sulfate, only heparan sulfate and both chondroitin sulfate and heparan sulfate.

It is found in the membrane. The protein localises to the secreted. Its function is as follows. Cell surface proteoglycan which regulates exosome biogenesis in concert with SDCBP and PDCD6IP. This Pongo abelii (Sumatran orangutan) protein is Syndecan-4.